The following is a 233-amino-acid chain: MSEFDPNPPRRNFYGRRHGKTLRQSQKGYLSEDLGSLRPRGITVQENPERKPVAPSTIFGDDRPVWLEVGFGGGEHMVHMAARYPEIGIIGCEPFINGVAMLLGKIRAAGVENVSVHPGDARDLMDVLPDASIDKAFLNYPDPWPKARHHRRRFVTPEHLIPLARVMKPGAEFRVATDIPDYVRQTLEEVPQAGFDLVAEGPQAWEDWPSTRYEQKALREGRVPHYVTFRRRS.

The tract at residues Met-1 to Ser-36 is disordered. Residues Glu-68, Glu-93, Asp-120, and Asp-142 each contribute to the S-adenosyl-L-methionine site. Asp-142 is a catalytic residue. Substrate contacts are provided by residues Lys-146, Asp-178, and Thr-211–Glu-214.

Belongs to the class I-like SAM-binding methyltransferase superfamily. TrmB family.

The enzyme catalyses guanosine(46) in tRNA + S-adenosyl-L-methionine = N(7)-methylguanosine(46) in tRNA + S-adenosyl-L-homocysteine. It participates in tRNA modification; N(7)-methylguanine-tRNA biosynthesis. Functionally, catalyzes the formation of N(7)-methylguanine at position 46 (m7G46) in tRNA. In Paracoccus denitrificans (strain Pd 1222), this protein is tRNA (guanine-N(7)-)-methyltransferase.